A 275-amino-acid chain; its full sequence is NADPH-dependent 7-cyano-7-deazaguanine reductase (275 aa).

81–83 (IES) lines the substrate pocket. 83 to 84 (SK) serves as a coordination point for NADPH. Catalysis depends on C181, which acts as the Thioimide intermediate. The active-site Proton donor is the D188. Residue 220–221 (HE) participates in substrate binding. Residue 249–250 (RG) participates in NADPH binding.

The protein belongs to the GTP cyclohydrolase I family. QueF type 2 subfamily. Homodimer.

Its subcellular location is the cytoplasm. It carries out the reaction 7-aminomethyl-7-carbaguanine + 2 NADP(+) = 7-cyano-7-deazaguanine + 2 NADPH + 3 H(+). It functions in the pathway tRNA modification; tRNA-queuosine biosynthesis. Functionally, catalyzes the NADPH-dependent reduction of 7-cyano-7-deazaguanine (preQ0) to 7-aminomethyl-7-deazaguanine (preQ1). In Xylella fastidiosa (strain M23), this protein is NADPH-dependent 7-cyano-7-deazaguanine reductase.